A 552-amino-acid chain; its full sequence is Steroid transmembrane transporter SLC22A24 (552 aa).

A run of 12 helical transmembrane segments spans residues 16–36 (FQIL…THIL), 144–164 (LKSV…LMFG), 175–197 (IYTW…PTFV), 201–220 (IFRF…AFIL), 232–252 (IGIT…GGLA), 255–275 (IRDW…LSLL), 349–369 (IICF…GLIL), 371–391 (LQDL…ITFI), 407–427 (INQS…TFLS), 435–455 (VVLA…FFVH), 474–494 (VFSR…VYSP), and 496–516 (LPWV…FCLP).

The protein belongs to the major facilitator (TC 2.A.1) superfamily. Organic cation transporter (TC 2.A.1.19) family.

Its subcellular location is the cell membrane. It catalyses the reaction estrone 3-sulfate(out) + glutarate(in) = estrone 3-sulfate(in) + glutarate(out). The enzyme catalyses 17beta-estradiol 17-O-(beta-D-glucuronate)(out) + glutarate(in) = 17beta-estradiol 17-O-(beta-D-glucuronate)(in) + glutarate(out). It carries out the reaction taurocholate(out) + glutarate(in) = taurocholate(in) + glutarate(out). The catalysed reaction is 5alpha-androstane-3alpha,17beta-diol 3-O-(beta-D-glucuronate)(out) + glutarate(in) = 5alpha-androstane-3alpha,17beta-diol 3-O-(beta-D-glucuronate)(in) + glutarate(out). It catalyses the reaction glycocholate(out) + glutarate(in) = glycocholate(in) + glutarate(out). The enzyme catalyses dehydroepiandrosterone 3-sulfate(out) + glutarate(in) = dehydroepiandrosterone 3-sulfate(in) + glutarate(out). It carries out the reaction glutarate(in) + succinate(out) = glutarate(out) + succinate(in). In terms of biological role, renal transmembrane organic anion/dicarboxylate exchanger that participates in the reabsorption of conjugated steroids, as well as bile acids, driven by an outward gradient of dicarboxylates such as glutarate or succinate. Transports androstanediol glucuronide (5alpha-androstane-3alpha,17beta-diol 3-O-(beta-D-glucuronate)), estrone 3-sulfate, and estradiol-17-glucuronide (17beta-estradiol 17-O-(beta-D-glucuronate)), and taurocholate. This is Steroid transmembrane transporter SLC22A24 from Oryctolagus cuniculus (Rabbit).